We begin with the raw amino-acid sequence, 910 residues long: Eukaryotic translation initiation factor 3 subunit C (910 aa).

The segment at 1–21 (MSRFFANGSDSESESSEDEIQ) is disordered. Over residues 11–20 (SESESSEDEI) the composition is skewed to acidic residues. Residues serine 34, serine 165, serine 176, and serine 185 each carry the phosphoserine modification. Residues 157–281 (FREAPDQESE…KRAEDDEDGE (125 aa)) are disordered. Positions 162–186 (DQESEAEDEVVAQESDGGDAGDDSD) are enriched in acidic residues. The span at 193-207 (EAAPKAVKSAPAKAA) shows a compositional bias: low complexity. A compositionally biased stretch (acidic residues) spans 209–235 (ADDDDSDDSIDWDSDSESETESSDDEN). Over residues 240-268 (MRERFLKRTTEKEEKDDDKRKDKRKEQKV) the composition is skewed to basic and acidic residues. The PCI domain occupies 639–815 (FHMHINLELL…ETVVMHRSEP (177 aa)). The disordered stretch occupies residues 847 to 910 (FFQRGNMGNR…QQQVQTIDEE (64 aa)). Positions 862 to 874 (NRNQNNQGGNWLG) are enriched in low complexity. Residues 882 to 891 (RNRNQRGHHK) are compositionally biased toward basic residues. Residues 895–910 (DRQQQQQQQVQTIDEE) show a composition bias toward low complexity.

This sequence belongs to the eIF-3 subunit C family. As to quaternary structure, component of the eukaryotic translation initiation factor 3 (eIF-3) complex. The eIF-3 complex interacts with pix.

It is found in the cytoplasm. In terms of biological role, component of the eukaryotic translation initiation factor 3 (eIF-3) complex, which is involved in protein synthesis of a specialized repertoire of mRNAs and, together with other initiation factors, stimulates binding of mRNA and methionyl-tRNAi to the 40S ribosome. The eIF-3 complex specifically targets and initiates translation of a subset of mRNAs involved in cell proliferation. The sequence is that of Eukaryotic translation initiation factor 3 subunit C from Drosophila yakuba (Fruit fly).